Reading from the N-terminus, the 334-residue chain is N-acetyl-gamma-glutamyl-phosphate reductase (334 aa).

Cys-154 is an active-site residue.

It belongs to the NAGSA dehydrogenase family. Type 1 subfamily.

Its subcellular location is the cytoplasm. The enzyme catalyses N-acetyl-L-glutamate 5-semialdehyde + phosphate + NADP(+) = N-acetyl-L-glutamyl 5-phosphate + NADPH + H(+). Its pathway is amino-acid biosynthesis; L-arginine biosynthesis; N(2)-acetyl-L-ornithine from L-glutamate: step 3/4. Functionally, catalyzes the NADPH-dependent reduction of N-acetyl-5-glutamyl phosphate to yield N-acetyl-L-glutamate 5-semialdehyde. In Yersinia pseudotuberculosis serotype I (strain IP32953), this protein is N-acetyl-gamma-glutamyl-phosphate reductase.